The chain runs to 375 residues: Naringenin 7-O-methyltransferase (375 aa).

136–142 (LNLDKVF) contributes to the substrate binding site. The segment at 168–188 (LFQYLGQDGNEPSNTLFNQAM) is substrate binding. The S-adenosyl-L-methionine site is built by glycine 219, aspartate 242, methionine 263, and lysine 276. Histidine 280 functions as the Proton acceptor in the catalytic mechanism.

It belongs to the class I-like SAM-binding methyltransferase superfamily. Cation-independent O-methyltransferase family. COMT subfamily.

It catalyses the reaction (2S)-naringenin + S-adenosyl-L-methionine = (2S)-sakuranetin + S-adenosyl-L-homocysteine + H(+). S-adenosyl-L-methionine-dependent methyltransferase involved in the biosynthesis of the sakuranetin, an inducible defense mechanism of O.sativa against pathogen attack. This Oryza sativa subsp. japonica (Rice) protein is Naringenin 7-O-methyltransferase.